A 230-amino-acid chain; its full sequence is Large ribosomal subunit protein uL1 (230 aa).

It belongs to the universal ribosomal protein uL1 family. As to quaternary structure, part of the 50S ribosomal subunit.

In terms of biological role, binds directly to 23S rRNA. The L1 stalk is quite mobile in the ribosome, and is involved in E site tRNA release. Its function is as follows. Protein L1 is also a translational repressor protein, it controls the translation of the L11 operon by binding to its mRNA. The polypeptide is Large ribosomal subunit protein uL1 (Acholeplasma laidlawii (strain PG-8A)).